Reading from the N-terminus, the 690-residue chain is Glycine--tRNA ligase beta subunit (690 aa).

It belongs to the class-II aminoacyl-tRNA synthetase family. Tetramer of two alpha and two beta subunits.

The protein resides in the cytoplasm. The enzyme catalyses tRNA(Gly) + glycine + ATP = glycyl-tRNA(Gly) + AMP + diphosphate. This Lactobacillus gasseri (strain ATCC 33323 / DSM 20243 / BCRC 14619 / CIP 102991 / JCM 1131 / KCTC 3163 / NCIMB 11718 / NCTC 13722 / AM63) protein is Glycine--tRNA ligase beta subunit.